The sequence spans 439 residues: Alpha-1,3-mannosyl-glycoprotein 4-beta-N-acetylglucosaminyltransferase-like protein MGAT4E (439 aa).

It participates in protein modification; protein glycosylation. In terms of biological role, glycosyltransferase-like protein that may participate in the transfer of N-acetylglucosamine (GlcNAc) to the core mannose residues of N-linked glycans. The chain is Alpha-1,3-mannosyl-glycoprotein 4-beta-N-acetylglucosaminyltransferase-like protein MGAT4E from Mus musculus (Mouse).